Here is a 125-residue protein sequence, read N- to C-terminus: MRNFILFPMMAVVLLSGCQQNRPTTLSPAVSGQAQLEQLASVAAGARYLKNKCNRSDLPADEAINRAAINVGKKRGWANIDANLLSQRSAQLYQQLQQDSTPEATKCSQFNRQLAPFIDSLRDNK.

Residues 1–17 (MRNFILFPMMAVVLLSG) form the signal peptide. A lipid anchor (N-palmitoyl cysteine) is attached at Cys-18. A lipid anchor (S-diacylglycerol cysteine) is attached at Cys-18.

To E.chrysanthemi OutS.

The protein localises to the cell outer membrane. Its function is as follows. Involved in the secretion of pullulanase. This chain is Pullulanase secretion protein PulS (pulS), found in Klebsiella pneumoniae.